The chain runs to 454 residues: Bifunctional protein GlmU (454 aa).

The tract at residues 1–225 is pyrophosphorylase; sequence MNIVILAAGM…IWETLGVNSK (225 aa). UDP-N-acetyl-alpha-D-glucosamine contacts are provided by residues 6 to 9, K20, Q71, 76 to 77, 98 to 100, G135, E150, N165, and N223; these read LAAG, GT, and YGD. D100 contacts Mg(2+). N223 is a Mg(2+) binding site. The linker stretch occupies residues 226–246; the sequence is LQLAEVERIHQGNQARRLLEA. An N-acetyltransferase region spans residues 247 to 454; it reads GVTLLDPARI…WQRPVKQPKK (208 aa). UDP-N-acetyl-alpha-D-glucosamine-binding residues include R329 and K347. Residue H359 is the Proton acceptor of the active site. Residues Y362 and N373 each contribute to the UDP-N-acetyl-alpha-D-glucosamine site. Residues A376, 382-383, S401, A419, and R436 contribute to the acetyl-CoA site; that span reads NY.

In the N-terminal section; belongs to the N-acetylglucosamine-1-phosphate uridyltransferase family. It in the C-terminal section; belongs to the transferase hexapeptide repeat family. In terms of assembly, homotrimer. Requires Mg(2+) as cofactor.

It localises to the cytoplasm. It catalyses the reaction alpha-D-glucosamine 1-phosphate + acetyl-CoA = N-acetyl-alpha-D-glucosamine 1-phosphate + CoA + H(+). The enzyme catalyses N-acetyl-alpha-D-glucosamine 1-phosphate + UTP + H(+) = UDP-N-acetyl-alpha-D-glucosamine + diphosphate. It functions in the pathway nucleotide-sugar biosynthesis; UDP-N-acetyl-alpha-D-glucosamine biosynthesis; N-acetyl-alpha-D-glucosamine 1-phosphate from alpha-D-glucosamine 6-phosphate (route II): step 2/2. The protein operates within nucleotide-sugar biosynthesis; UDP-N-acetyl-alpha-D-glucosamine biosynthesis; UDP-N-acetyl-alpha-D-glucosamine from N-acetyl-alpha-D-glucosamine 1-phosphate: step 1/1. It participates in bacterial outer membrane biogenesis; LPS lipid A biosynthesis. In terms of biological role, catalyzes the last two sequential reactions in the de novo biosynthetic pathway for UDP-N-acetylglucosamine (UDP-GlcNAc). The C-terminal domain catalyzes the transfer of acetyl group from acetyl coenzyme A to glucosamine-1-phosphate (GlcN-1-P) to produce N-acetylglucosamine-1-phosphate (GlcNAc-1-P), which is converted into UDP-GlcNAc by the transfer of uridine 5-monophosphate (from uridine 5-triphosphate), a reaction catalyzed by the N-terminal domain. The polypeptide is Bifunctional protein GlmU (Cupriavidus necator (strain ATCC 17699 / DSM 428 / KCTC 22496 / NCIMB 10442 / H16 / Stanier 337) (Ralstonia eutropha)).